A 40-amino-acid chain; its full sequence is Photosystem I reaction center subunit IX (40 aa).

The chain crosses the membrane as a helical span at residues A12–F34.

The protein belongs to the PsaJ family.

The protein resides in the plastid. Its subcellular location is the chloroplast thylakoid membrane. Its function is as follows. May help in the organization of the PsaE and PsaF subunits. This is Photosystem I reaction center subunit IX from Emiliania huxleyi (Coccolithophore).